We begin with the raw amino-acid sequence, 437 residues long: Putative ankyrin repeat protein FPV014 (437 aa).

ANK repeat units lie at residues 32-61, 65-94, 99-128, 131-160, 164-195, 197-226, and 230-259; these read YGCSLLHCAVENGNTEIARILLLEGANPDL, STPTALHRAVILRHYDIVNLLMEFNVDPDN, ESRTPLEYAVKLNDVKMTKTLLDYGADAED, RFNCPINDAAANGNLEICKLLIDAGARINS, GSVYTIHHAIRSGNYELVVELLSRGALPDVED, LSFSSLHHAVMEGSADMVLTLLEHGASVDV, and CGRTPLFLAANASELDIVKVLLDFWADTSV.

This is Putative ankyrin repeat protein FPV014 from Fowlpox virus (strain NVSL) (FPV).